The chain runs to 260 residues: Cytochrome c oxidase subunit 3 (260 aa).

Transmembrane regions (helical) follow at residues 14-34 (PWPL…ILWF), 41-61 (LLLA…RDVI), 81-101 (GMIL…WAFF), 126-146 (FLVP…VTWA), 158-178 (AIQG…LQAW), 196-216 (FFVA…FLFI), and 238-258 (AWYW…ICWW).

It belongs to the cytochrome c oxidase subunit 3 family. Component of the cytochrome c oxidase (complex IV, CIV), a multisubunit enzyme composed of a catalytic core of 3 subunits and several supernumerary subunits. The complex exists as a monomer or a dimer and forms supercomplexes (SCs) in the inner mitochondrial membrane with ubiquinol-cytochrome c oxidoreductase (cytochrome b-c1 complex, complex III, CIII).

It localises to the mitochondrion inner membrane. The enzyme catalyses 4 Fe(II)-[cytochrome c] + O2 + 8 H(+)(in) = 4 Fe(III)-[cytochrome c] + 2 H2O + 4 H(+)(out). In terms of biological role, component of the cytochrome c oxidase, the last enzyme in the mitochondrial electron transport chain which drives oxidative phosphorylation. The respiratory chain contains 3 multisubunit complexes succinate dehydrogenase (complex II, CII), ubiquinol-cytochrome c oxidoreductase (cytochrome b-c1 complex, complex III, CIII) and cytochrome c oxidase (complex IV, CIV), that cooperate to transfer electrons derived from NADH and succinate to molecular oxygen, creating an electrochemical gradient over the inner membrane that drives transmembrane transport and the ATP synthase. Cytochrome c oxidase is the component of the respiratory chain that catalyzes the reduction of oxygen to water. Electrons originating from reduced cytochrome c in the intermembrane space (IMS) are transferred via the dinuclear copper A center (CU(A)) of subunit 2 and heme A of subunit 1 to the active site in subunit 1, a binuclear center (BNC) formed by heme A3 and copper B (CU(B)). The BNC reduces molecular oxygen to 2 water molecules using 4 electrons from cytochrome c in the IMS and 4 protons from the mitochondrial matrix. In Patiria pectinifera (Starfish), this protein is Cytochrome c oxidase subunit 3 (COIII).